Here is a 258-residue protein sequence, read N- to C-terminus: Acyl-[acyl-carrier-protein]--UDP-N-acetylglucosamine O-acyltransferase (258 aa).

This sequence belongs to the transferase hexapeptide repeat family. LpxA subfamily. As to quaternary structure, homotrimer.

Its subcellular location is the cytoplasm. The enzyme catalyses a (3R)-hydroxyacyl-[ACP] + UDP-N-acetyl-alpha-D-glucosamine = a UDP-3-O-[(3R)-3-hydroxyacyl]-N-acetyl-alpha-D-glucosamine + holo-[ACP]. The protein operates within glycolipid biosynthesis; lipid IV(A) biosynthesis; lipid IV(A) from (3R)-3-hydroxytetradecanoyl-[acyl-carrier-protein] and UDP-N-acetyl-alpha-D-glucosamine: step 1/6. Involved in the biosynthesis of lipid A, a phosphorylated glycolipid that anchors the lipopolysaccharide to the outer membrane of the cell. The protein is Acyl-[acyl-carrier-protein]--UDP-N-acetylglucosamine O-acyltransferase of Pseudomonas fluorescens (strain Pf0-1).